We begin with the raw amino-acid sequence, 242 residues long: ATP-dependent dethiobiotin synthetase BioD (242 aa).

15–20 (DVGKTV) is a binding site for ATP. Threonine 19 provides a ligand contact to Mg(2+). Residue lysine 40 is part of the active site. Serine 44 provides a ligand contact to substrate. Mg(2+) is bound at residue glutamate 117. ATP is bound by residues 117 to 120 (EGAG), 178 to 179 (NQ), and 208 to 210 (PYS).

It belongs to the dethiobiotin synthetase family. As to quaternary structure, homodimer. It depends on Mg(2+) as a cofactor.

The protein localises to the cytoplasm. It carries out the reaction (7R,8S)-7,8-diammoniononanoate + CO2 + ATP = (4R,5S)-dethiobiotin + ADP + phosphate + 3 H(+). It participates in cofactor biosynthesis; biotin biosynthesis; biotin from 7,8-diaminononanoate: step 1/2. Its function is as follows. Catalyzes a mechanistically unusual reaction, the ATP-dependent insertion of CO2 between the N7 and N8 nitrogen atoms of 7,8-diaminopelargonic acid (DAPA, also called 7,8-diammoniononanoate) to form a ureido ring. The protein is ATP-dependent dethiobiotin synthetase BioD of Halalkalibacterium halodurans (strain ATCC BAA-125 / DSM 18197 / FERM 7344 / JCM 9153 / C-125) (Bacillus halodurans).